A 262-amino-acid chain; its full sequence is Carbonic anhydrase 13 (262 aa).

One can recognise an Alpha-carbonic anhydrase domain in the interval 4-261 (LSWGYREHNG…LKGRKVRASF (258 aa)). The active-site Proton donor/acceptor is H65. Residues H95, H97, and H120 each coordinate Zn(2+). A substrate-binding site is contributed by 200-201 (TV).

It belongs to the alpha-carbonic anhydrase family. Requires Zn(2+) as cofactor. In terms of tissue distribution, expressed in thymus, small intestine, spleen, prostate, ovary, colon and testis.

The enzyme catalyses hydrogencarbonate + H(+) = CO2 + H2O. Its activity is regulated as follows. Inhibited by acetazolamide. Reversible hydration of carbon dioxide. This is Carbonic anhydrase 13 (CA13) from Homo sapiens (Human).